A 158-amino-acid chain; its full sequence is Sporulation-delaying protein SdpA (158 aa).

The protein resides in the cytoplasm. Functionally, required for the maturation of SdpC to SDP. Not required for SdpC signal peptide cleavage, secretion from the cell or disulfide bond formation. The polypeptide is Sporulation-delaying protein SdpA (Bacillus subtilis (strain 168)).